Consider the following 421-residue polypeptide: D-amino acid dehydrogenase (421 aa).

3 to 17 is a binding site for FAD; the sequence is VLILGSGVIGVTSAY.

This sequence belongs to the DadA oxidoreductase family. Requires FAD as cofactor.

The enzyme catalyses a D-alpha-amino acid + A + H2O = a 2-oxocarboxylate + AH2 + NH4(+). Its function is as follows. Oxidative deamination of D-amino acids. The protein is D-amino acid dehydrogenase of Bradyrhizobium diazoefficiens (strain JCM 10833 / BCRC 13528 / IAM 13628 / NBRC 14792 / USDA 110).